Here is a 456-residue protein sequence, read N- to C-terminus: Chordin-like protein 1 (456 aa).

Residues 1–28 (MRRKWRSEDFHFVFFGVLCLLLIDRGKL) form the signal peptide. 3 consecutive VWFC domains span residues 36-101 (TYCV…PRCP), 115-181 (KSCE…PVCR), and 262-327 (RVCV…KVCP). Asn120 carries N-linked (GlcNAc...) asparagine glycosylation. A Cell attachment site motif is present at residues 181 to 183 (RGD). N-linked (GlcNAc...) asparagine glycosylation is present at Asn295.

In terms of tissue distribution, mainly expressed in the ventral retina.

The protein localises to the secreted. In terms of biological role, seems to antagonize the function of BMP4 by binding to it and preventing its interaction with receptors. The sequence is that of Chordin-like protein 1 (CHRDL1) from Gallus gallus (Chicken).